Consider the following 232-residue polypeptide: Aliphatic sulfonates import ATP-binding protein SsuB 2 (232 aa).

The 216-residue stretch at 1–216 folds into the ABC transporter domain; that stretch reads MDIRVDRKAF…PRDRRDPLLA (216 aa). Residue 33-40 participates in ATP binding; that stretch reads GPSGCGKS.

Belongs to the ABC transporter superfamily. Aliphatic sulfonates importer (TC 3.A.1.17.2) family. In terms of assembly, the complex is composed of two ATP-binding proteins (SsuB), two transmembrane proteins (SsuC) and a solute-binding protein (SsuA).

It is found in the cell inner membrane. The catalysed reaction is ATP + H2O + aliphatic sulfonate-[sulfonate-binding protein]Side 1 = ADP + phosphate + aliphatic sulfonateSide 2 + [sulfonate-binding protein]Side 1.. Its function is as follows. Part of the ABC transporter complex SsuABC involved in aliphatic sulfonates import. Responsible for energy coupling to the transport system. The polypeptide is Aliphatic sulfonates import ATP-binding protein SsuB 2 (Pseudomonas syringae pv. tomato (strain ATCC BAA-871 / DC3000)).